We begin with the raw amino-acid sequence, 243 residues long: Variant surface antigen E (243 aa).

Positions 1-29 (MKKSIFSKKLLVSFGSLVTLAAIPLIAIS) are cleaved as a signal peptide. A lipid anchor (N-palmitoyl cysteine) is attached at cysteine 30. Cysteine 30 is lipidated: S-diacylglycerol cysteine. The segment at 34–243 (TDNLSQSQQP…TTSDGQNQNK (210 aa)) is disordered. Residues 52–92 (GTNTENGSNNGSGSGTTNSSGGTNQSGSASGNGSSNSSVST) show a composition bias toward low complexity. Over residues 93–243 (PDGQHSNPSN…TTSDGQNQNK (151 aa)) the composition is skewed to polar residues. 11 tandem repeats follow at residues 97-109 (HSNPSNPTTSDPK), 110-122 (ESNPSNPTTSDPK), 123-135 (ESNPSNPTTSDGQ), 136-148 (HSNPSNPTTSDPK), 149-161 (ESNPSNPTTSDGQ), 162-174 (HSNPSNPTTSDGQ), 175-187 (HSNPSNPTTSDGQ), 188-200 (HSNPSNPTTSDGQ), 201-213 (HSNPSNPTTSDGQ), 214-226 (HSNPSNPTTSDGQ), and 227-239 (HSNPSNPTTSDGQ). Positions 97 to 239 (HSNPSNPTTS…PSNPTTSDGQ (143 aa)) are 11 X 13 AA tandem repeats.

The protein resides in the cell membrane. Its function is as follows. Responsible for the antigenic diversity for host adaptation. Expression in E.coli of a construct containing vlpD, vlpE, and vlpF yields antigenically distinguishable products corresponding to each gene. This Mesomycoplasma hyorhinis (Mycoplasma hyorhinis) protein is Variant surface antigen E (vlpE).